The following is a 701-amino-acid chain: Polyribonucleotide nucleotidyltransferase (701 aa).

Positions 485 and 491 each coordinate Mg(2+). Residues 552–611 (PKIFKTTVDPEKIRDIIGPGGKMINKIIAETNVKIDIEPDGRIFVAAPDDISGNRAISMI) enclose the KH domain. Residues 621–689 (GQFFLGKVTR…KLGRLSLSRK (69 aa)) enclose the S1 motif domain.

This sequence belongs to the polyribonucleotide nucleotidyltransferase family. Mg(2+) is required as a cofactor.

The protein localises to the cytoplasm. The catalysed reaction is RNA(n+1) + phosphate = RNA(n) + a ribonucleoside 5'-diphosphate. In terms of biological role, involved in mRNA degradation. Catalyzes the phosphorolysis of single-stranded polyribonucleotides processively in the 3'- to 5'-direction. The polypeptide is Polyribonucleotide nucleotidyltransferase (Caldicellulosiruptor bescii (strain ATCC BAA-1888 / DSM 6725 / KCTC 15123 / Z-1320) (Anaerocellum thermophilum)).